The chain runs to 243 residues: Uridylate kinase (243 aa).

ATP is bound at residue 18 to 21 (KLGG). Gly59 contacts UMP. 2 residues coordinate ATP: Gly60 and Arg64. Residues Asp79 and 140 to 147 (MGMPYFST) contribute to the UMP site. Positions 173 and 176 each coordinate ATP.

Belongs to the UMP kinase family. As to quaternary structure, homohexamer.

The protein localises to the cytoplasm. It catalyses the reaction UMP + ATP = UDP + ADP. The protein operates within pyrimidine metabolism; CTP biosynthesis via de novo pathway; UDP from UMP (UMPK route): step 1/1. Its activity is regulated as follows. Inhibited by UTP. Catalyzes the reversible phosphorylation of UMP to UDP. This Corynebacterium diphtheriae (strain ATCC 700971 / NCTC 13129 / Biotype gravis) protein is Uridylate kinase.